We begin with the raw amino-acid sequence, 333 residues long: L-lactate dehydrogenase B chain (333 aa).

Residues 29-57 (GQVG…WEDK) and Arg-99 contribute to the NAD(+) site. Substrate is bound by residues Arg-106, Asn-138, and Arg-169. Residue Asn-138 coordinates NAD(+). The active-site Proton acceptor is His-193. Thr-248 serves as a coordination point for substrate.

Belongs to the LDH/MDH superfamily. LDH family. Homotetramer.

Its subcellular location is the cytoplasm. The catalysed reaction is (S)-lactate + NAD(+) = pyruvate + NADH + H(+). Its pathway is fermentation; pyruvate fermentation to lactate; (S)-lactate from pyruvate: step 1/1. Its function is as follows. Interconverts simultaneously and stereospecifically pyruvate and lactate with concomitant interconversion of NADH and NAD(+). The protein is L-lactate dehydrogenase B chain (LDHB) of Trachemys scripta elegans (Red-eared slider turtle).